The sequence spans 57 residues: Peptide BmKa1 (57 aa).

The N-terminal stretch at 1 to 22 (MKPRVFFLLFLLVAAMIETGES) is a signal peptide. Composition is skewed to acidic residues over residues 20–29 (GESEENEEGS) and 45–57 (VDNE…GDSD). Residues 20–57 (GESEENEEGSNESGKSTEAKNTDASVDNEDSDIDGDSD) are disordered.

This sequence belongs to the non-disulfide-bridged peptide (NDBP) superfamily. Expressed by the venom gland.

It is found in the secreted. The polypeptide is Peptide BmKa1 (Olivierus martensii (Manchurian scorpion)).